The primary structure comprises 364 residues: Chorismate synthase (364 aa).

NADP(+)-binding residues include arginine 48 and arginine 54. FMN-binding positions include 125-127 (RSS), 238-239 (NA), glycine 278, 293-297 (KPTSS), and arginine 319.

The protein belongs to the chorismate synthase family. Homotetramer. Requires FMNH2 as cofactor.

It catalyses the reaction 5-O-(1-carboxyvinyl)-3-phosphoshikimate = chorismate + phosphate. It functions in the pathway metabolic intermediate biosynthesis; chorismate biosynthesis; chorismate from D-erythrose 4-phosphate and phosphoenolpyruvate: step 7/7. Functionally, catalyzes the anti-1,4-elimination of the C-3 phosphate and the C-6 proR hydrogen from 5-enolpyruvylshikimate-3-phosphate (EPSP) to yield chorismate, which is the branch point compound that serves as the starting substrate for the three terminal pathways of aromatic amino acid biosynthesis. This reaction introduces a second double bond into the aromatic ring system. The polypeptide is Chorismate synthase (Shewanella loihica (strain ATCC BAA-1088 / PV-4)).